A 253-amino-acid polypeptide reads, in one-letter code: Ferritin-2, chloroplastic (253 aa).

The N-terminal 45 residues, 1 to 45 (MLHKASPALSLLSSGYTGGGNLFPPSRNSSNLLFSPSGSRFSVQA), are a transit peptide targeting the chloroplast. An extension peptide (EP) region spans residues 46–82 (AKGTNTKSLTGVVFEPFEEVKKEMELVPTTPFVSLAR). A Ferritin-like diiron domain is found at 83–236 (HKFSDDSESA…EYVAQLRRIG (154 aa)). Residues Glu100, Glu135, His138, Glu184, and Gln218 each contribute to the Fe cation site.

Belongs to the ferritin family. As to quaternary structure, oligomer of 24 subunits. There are two types of subunits: L (light) chain and H (heavy) chain. The major chain can be light or heavy, depending on the species and tissue type. The functional molecule forms a roughly spherical shell with a diameter of 12 nm and contains a central cavity into which the insoluble mineral iron core is deposited.

The protein localises to the plastid. It localises to the chloroplast. The enzyme catalyses 4 Fe(2+) + O2 + 4 H(+) = 4 Fe(3+) + 2 H2O. Functionally, stores iron in a soluble, non-toxic, readily available form. Important for iron homeostasis. Has ferroxidase activity. Iron is taken up in the ferrous form and deposited as ferric hydroxides after oxidation. This is Ferritin-2, chloroplastic (FER2) from Arabidopsis thaliana (Mouse-ear cress).